The primary structure comprises 338 residues: Anthranilate phosphoribosyltransferase (338 aa).

5-phospho-alpha-D-ribose 1-diphosphate contacts are provided by residues Gly81, 84 to 85 (GD), Thr89, 91 to 94 (NIST), 109 to 117 (KHGNRNLSS), and Ala121. Gly81 provides a ligand contact to anthranilate. Residue Ser93 participates in Mg(2+) binding. Asn112 provides a ligand contact to anthranilate. An anthranilate-binding site is contributed by Arg167. The Mg(2+) site is built by Asp226 and Glu227.

This sequence belongs to the anthranilate phosphoribosyltransferase family. Homodimer. Mg(2+) is required as a cofactor.

The catalysed reaction is N-(5-phospho-beta-D-ribosyl)anthranilate + diphosphate = 5-phospho-alpha-D-ribose 1-diphosphate + anthranilate. It participates in amino-acid biosynthesis; L-tryptophan biosynthesis; L-tryptophan from chorismate: step 2/5. In terms of biological role, catalyzes the transfer of the phosphoribosyl group of 5-phosphorylribose-1-pyrophosphate (PRPP) to anthranilate to yield N-(5'-phosphoribosyl)-anthranilate (PRA). The chain is Anthranilate phosphoribosyltransferase from Cereibacter sphaeroides (strain ATCC 17025 / ATH 2.4.3) (Rhodobacter sphaeroides).